A 450-amino-acid chain; its full sequence is NADP-specific glutamate dehydrogenase (450 aa).

K114 is an active-site residue.

Belongs to the Glu/Leu/Phe/Val dehydrogenases family. In terms of assembly, homohexamer.

It carries out the reaction L-glutamate + NADP(+) + H2O = 2-oxoglutarate + NH4(+) + NADPH + H(+). This chain is NADP-specific glutamate dehydrogenase (gdhA), found in Botryotinia fuckeliana (Noble rot fungus).